The primary structure comprises 173 residues: NADH-ubiquinone oxidoreductase chain 6 (173 aa).

A run of 5 helical transmembrane segments spans residues 1–21 (MAYIMLTLLIGMVLGVISVAS), 25–45 (PYFAALGLVLVAGVGCVVLMG), 53–73 (LVLFLIYLGGMLVVFAYCAAL), 87–107 (VLGSVLGYLLLVVGAGSWFWG), and 139–159 (LGGGLLVVSAWVLLLTLLVVL).

The protein belongs to the complex I subunit 6 family.

The protein localises to the mitochondrion membrane. The catalysed reaction is a ubiquinone + NADH + 5 H(+)(in) = a ubiquinol + NAD(+) + 4 H(+)(out). In terms of biological role, core subunit of the mitochondrial membrane respiratory chain NADH dehydrogenase (Complex I) that is believed to belong to the minimal assembly required for catalysis. Complex I functions in the transfer of electrons from NADH to the respiratory chain. The immediate electron acceptor for the enzyme is believed to be ubiquinone. The protein is NADH-ubiquinone oxidoreductase chain 6 (MT-ND6) of Gadus morhua (Atlantic cod).